We begin with the raw amino-acid sequence, 463 residues long: MSYPGYPPTGYPPFPGYPPAGQESSFPTAGQYPYPSGFPPMGGGAYPPAPSGGYPGAGGYPAPGGYPAPGGYPGALSPGGPPAYPGGQGFGAPPGGAGFSGYPQPPAQSYGGGPAQVPVPGGFPGGQMPSQYPGGQAPYPSQPASMTQGTQGTILPASNFDAMRDAEILRKAMKGFGTDEQAIVDVVSNRSNDQRQQIKAAFKTMYGKDLIKDLKSELSGNMEELILALFMPSTYYDAWSLRKAMQGAGTQERVLIEILCTRTNQEIRDIVRCYQLEFGRDLEKDIRSDTSGHFERLLVSMCQGNRDERQSVNHQMAQEDAQRLYQAGEGRLGTDESCFNMILATRSFPQLKATMEAYSRMANRDLLSSVSREFSGYVESGLKTILQCALNRPAFFAERLYYSMKGAGTDDSTLVRIVVTRSEIDLVQIKQMFTQMYQKTLSTMIASDTSGDYRKLLLAIVGQ.

The span at 1 to 18 (MSYPGYPPTGYPPFPGYP) shows a compositional bias: pro residues. 2 disordered regions span residues 1–34 (MSYP…QYPY) and 77–149 (SPGG…MTQG). A repeat-rich region region spans residues 1–143 (MSYPGYPPTG…GGQAPYPSQP (143 aa)). The segment at 5–20 (GYPPTGYPPFPGYPPA) is 3 X 5 AA tandem repeats of G-Y-P-P-X. Positions 86 to 99 (GGQGFGAPPGGAGF) are enriched in gly residues. Annexin repeat units lie at residues 160–231 (FDAM…ALFM), 232–303 (PSTY…SMCQ), 315–387 (QMAQ…TILQ), and 391–462 (NRPA…AIVG). At Lys-208 the chain carries N6-acetyllysine.

This sequence belongs to the annexin family. In terms of assembly, interacts with PDCD6.

In terms of biological role, calcium/phospholipid-binding protein which promotes membrane fusion and is involved in exocytosis. In Mus musculus (Mouse), this protein is Annexin A7 (Anxa7).